The chain runs to 588 residues: Protein POF1B (588 aa).

Coiled-coil stretches lie at residues 332–442 and 502–530; these read STFS…VSET and LHEL…RQEI.

Interacts with nonmuscle actin.

The protein resides in the cell junction. It localises to the tight junction. In terms of biological role, plays a key role in the organization of epithelial monolayers by regulating the actin cytoskeleton. May be involved in ovary development. This is Protein POF1B (POF1B) from Pongo abelii (Sumatran orangutan).